The following is a 488-amino-acid chain: Germacrene A hydroxylase (488 aa).

Topologically, residues 1-6 (MELSIT) are cytoplasmic. Residues 7–23 (TSIALATIVFFLYKLAT) traverse the membrane as a helical; Signal-anchor for type II membrane protein segment. Residues 24–488 (RPKSTKKQLP…KTELLLVPSF (465 aa)) are Lumenal-facing. N-linked (GlcNAc...) asparagine glycosylation is found at Asn169, Asn260, and Asn379. A heme-binding site is contributed by Cys432.

It belongs to the cytochrome P450 family. The cofactor is heme.

The protein resides in the endoplasmic reticulum membrane. The catalysed reaction is (+)-(R)-germacrene A + 3 reduced [NADPH--hemoprotein reductase] + 3 O2 = germacra-1(10),4,11(13)-trien-12-oate + 3 oxidized [NADPH--hemoprotein reductase] + 4 H2O + 4 H(+). The protein operates within secondary metabolite biosynthesis; terpenoid biosynthesis. Involved in the biosynthesis of germacrene-derived sesquiterpene lactones. Catalyzes three consecutive oxidations of germacrene A to produce germacrene A acid. Could also catalyze the three-step oxidation of non-natural substrate amorphadiene to artemisinic acid. This is Germacrene A hydroxylase from Lactuca sativa (Garden lettuce).